The chain runs to 476 residues: Chromosomal replication initiator protein DnaA (476 aa).

Positions 1–73 are domain I, interacts with DnaA modulators; that stretch reads MTNSEQERWS…LSAWQAEMPE (73 aa). The domain II stretch occupies residues 73–132; that stretch reads EVHRIDLSVRTAMRCATPAKEAPAAVEARRPERSDAKPVSDARAPVMTPVAASHDALGGS. The interval 92–115 is disordered; it reads KEAPAAVEARRPERSDAKPVSDAR. Residues 99–112 are compositionally biased toward basic and acidic residues; that stretch reads EARRPERSDAKPVS. The tract at residues 133 to 355 is domain III, AAA+ region; that stretch reads PLDPRLTFAS…GAINRLLAHS (223 aa). The ATP site is built by Gly-180, Gly-182, Lys-183, and Thr-184. A domain IV, binds dsDNA region spans residues 356 to 476; it reads KLNNQPVTLD…VESLKRQLQD (121 aa).

This sequence belongs to the DnaA family. As to quaternary structure, oligomerizes as a right-handed, spiral filament on DNA at oriC.

It localises to the cytoplasm. Plays an essential role in the initiation and regulation of chromosomal replication. ATP-DnaA binds to the origin of replication (oriC) to initiate formation of the DNA replication initiation complex once per cell cycle. Binds the DnaA box (a 9 base pair repeat at the origin) and separates the double-stranded (ds)DNA. Forms a right-handed helical filament on oriC DNA; dsDNA binds to the exterior of the filament while single-stranded (ss)DNA is stabiized in the filament's interior. The ATP-DnaA-oriC complex binds and stabilizes one strand of the AT-rich DNA unwinding element (DUE), permitting loading of DNA polymerase. After initiation quickly degrades to an ADP-DnaA complex that is not apt for DNA replication. Binds acidic phospholipids. The sequence is that of Chromosomal replication initiator protein DnaA from Bradyrhizobium sp. (strain ORS 278).